Here is a 466-residue protein sequence, read N- to C-terminus: Ribosome biogenesis protein YTM1 (466 aa).

Residues 11–99 (IKIKFFTNEE…EAFLTLEYTR (89 aa)) form a ubiquitin-like (UBL) domain region. The sufficient for interaction with ERB1 and association with 66S pre-ribosomes stretch occupies residues 109–466 (SFNNDDWISS…QINKGSDIAK (358 aa)). 7 WD repeats span residues 124–163 (PTTKIVMSSQLSISQPKILSGSYDGIVRTYNMSGKVEKQY), 165–203 (GHSAPVKAVKWISPTRIVSAGNDRQVRLWKTSYEEIIDE), 219–258 (GHKAPVVDLAVDTQTNRILSAGYDQNIGFWSTNYKEMTSI), 296–336 (GHSE…CVDT), 338–377 (TTGYSLLSVLQLPQVNLIASGSSARHINLHDPRVTTTSDQ), 384–424 (GHTN…SLYT), and 431–466 (STNAKIFDVCWDDRIGIISGGEDKKLQINKGSDIAK).

The protein belongs to the WD repeat WDR12/YTM1 family. In terms of assembly, component of the NOP7 complex, composed of ERB1, NOP7 and YTM1. The complex is held together by ERB1, which interacts with NOP7 via its N-terminal domain and with YTM1 via a high-affinity interaction between the seven-bladed beta-propeller domains of the 2 proteins. The NOP7 complex associates with the 66S pre-ribosome. Interacts (via UBL domain) with MDN1 (via VWFA/MIDAS domain).

Its subcellular location is the nucleus. The protein localises to the nucleolus. The protein resides in the nucleoplasm. In terms of biological role, component of the NOP7 complex, which is required for maturation of the 25S and 5.8S ribosomal RNAs and formation of the 60S ribosome. This chain is Ribosome biogenesis protein YTM1, found in Candida albicans (strain SC5314 / ATCC MYA-2876) (Yeast).